Consider the following 373-residue polypeptide: 3-dehydroquinate synthase (373 aa).

NAD(+) contacts are provided by residues 107 to 111 (GVIGD), 131 to 132 (TS), lysine 144, and lysine 153. Zn(2+) is bound by residues glutamate 186, histidine 249, and histidine 267.

This sequence belongs to the sugar phosphate cyclases superfamily. Dehydroquinate synthase family. Requires Co(2+) as cofactor. The cofactor is Zn(2+). It depends on NAD(+) as a cofactor.

Its subcellular location is the cytoplasm. The enzyme catalyses 7-phospho-2-dehydro-3-deoxy-D-arabino-heptonate = 3-dehydroquinate + phosphate. Its pathway is metabolic intermediate biosynthesis; chorismate biosynthesis; chorismate from D-erythrose 4-phosphate and phosphoenolpyruvate: step 2/7. Functionally, catalyzes the conversion of 3-deoxy-D-arabino-heptulosonate 7-phosphate (DAHP) to dehydroquinate (DHQ). The chain is 3-dehydroquinate synthase from Ruegeria sp. (strain TM1040) (Silicibacter sp.).